The chain runs to 142 residues: Peptide methionine sulfoxide reductase MsrB (142 aa).

In terms of domain architecture, MsrB spans 3–126 (KEELKKKLSP…NSAALRFIPF (124 aa)). Catalysis depends on C115, which acts as the Nucleophile.

Belongs to the MsrB Met sulfoxide reductase family.

It catalyses the reaction L-methionyl-[protein] + [thioredoxin]-disulfide + H2O = L-methionyl-(R)-S-oxide-[protein] + [thioredoxin]-dithiol. This Lactococcus lactis subsp. cremoris (strain MG1363) protein is Peptide methionine sulfoxide reductase MsrB.